Consider the following 499-residue polypeptide: Probable malate:quinone oxidoreductase 4 (499 aa).

It belongs to the MQO family. FAD serves as cofactor.

The catalysed reaction is (S)-malate + a quinone = a quinol + oxaloacetate. It participates in carbohydrate metabolism; tricarboxylic acid cycle; oxaloacetate from (S)-malate (quinone route): step 1/1. This is Probable malate:quinone oxidoreductase 4 from Staphylococcus epidermidis (strain ATCC 12228 / FDA PCI 1200).